Reading from the N-terminus, the 606-residue chain is Homeobox protein B-H1 (606 aa).

Residues 1-14 are compositionally biased toward polar residues; sequence MKDSMSILTQTPSE. Disordered regions lie at residues 1-65, 104-188, 261-340, and 508-606; these read MKDS…PAVA, YKQQ…HPHA, APAG…AFTD, and AAAN…QIQV. Basic residues predominate over residues 21–40; the sequence is QLHHHLSHHHHPALHHHPVL. Residues 41 to 65 are compositionally biased toward low complexity; the sequence is QHHYSLQQQHQQQQQQQPPAPPAVA. The span at 108-118 shows a compositional bias: basic residues; that stretch reads QQHHHHHHQSH. Low complexity predominate over residues 119 to 138; sequence HNNNNHSGGSSGGTSPTHHN. The segment covering 166-188 has biased composition (basic residues); sequence HHLHPQSHPHPHPHPHSHPHPHA. Residues 266-284 show a composition bias toward acidic residues; the sequence is ELDDSSDYHEENEDCDSDE. Gly residues predominate over residues 286–295; that stretch reads GSAGGGGGGS. Positions 297–314 are enriched in basic and acidic residues; sequence HMDDHSVCSNGGKDDDGN. Polar residues predominate over residues 315–325; it reads SIKSGSTSDMS. Positions 331–390 form a DNA-binding region, homeobox; that stretch reads QRKARTAFTDHQLQTLEKSFERQKYLSVQERQELAHKLDLSDCQVKTWYQNRRTKWMRQT. The segment covering 513-522 has biased composition (pro residues); it reads GGPPPPPPPS. The segment covering 523 to 534 has biased composition (low complexity); it reads SAAAATGGSPSP. The span at 561–576 shows a compositional bias: pro residues; that stretch reads ASPPLPLPLARPPSTP.

This sequence belongs to the Antp homeobox family. As to expression, abundant in the eye-antenna imaginal disk.

Its subcellular location is the nucleus. Functionally required in R1 and R6 receptor cells and primary pigment cells for normal eye development. The protein is Homeobox protein B-H1 (B-H1) of Drosophila ananassae (Fruit fly).